Consider the following 197-residue polypeptide: MQTEVQKLTNAKAIITYLAEKFPLCFVLEGEAKPLKIGLFQDLAEALQDDERVSKTQLRQALRQYTSNWRYLYGCREGAVRVDLQGNPAGVLDAEHVAHAAQQLAEAKARFAEKRAAAKKAQQKKHPRKPANKNLKKESKLSLSAVDFSQISVGSVVKVKAGDNAKKATVVEVLKDSARVELENGLIMNVAADRLFA.

Residues 115-138 (RAAAKKAQQKKHPRKPANKNLKKE) are disordered. Basic residues predominate over residues 117 to 131 (AAKKAQQKKHPRKPA).

The protein belongs to the ProQ family.

It is found in the cytoplasm. Its function is as follows. RNA chaperone with significant RNA binding, RNA strand exchange and RNA duplexing activities. The protein is RNA chaperone ProQ of Haemophilus influenzae (strain ATCC 51907 / DSM 11121 / KW20 / Rd).